The sequence spans 279 residues: uncharacterized protein (279 aa).

The disordered stretch occupies residues methionine 1 to glycine 28. Positions serine 9–asparagine 23 are enriched in low complexity. The helical transmembrane segment at lysine 256–alanine 273 threads the bilayer.

The protein resides in the host membrane. This is an uncharacterized protein from Pseudoalteromonas espejiana (Bacteriophage PM2).